The primary structure comprises 290 residues: ATP synthase gamma chain (290 aa).

Belongs to the ATPase gamma chain family. F-type ATPases have 2 components, CF(1) - the catalytic core - and CF(0) - the membrane proton channel. CF(1) has five subunits: alpha(3), beta(3), gamma(1), delta(1), epsilon(1). CF(0) has three main subunits: a, b and c.

The protein localises to the cell membrane. Its function is as follows. Produces ATP from ADP in the presence of a proton gradient across the membrane. The gamma chain is believed to be important in regulating ATPase activity and the flow of protons through the CF(0) complex. In Akkermansia muciniphila (strain ATCC BAA-835 / DSM 22959 / JCM 33894 / BCRC 81048 / CCUG 64013 / CIP 107961 / Muc), this protein is ATP synthase gamma chain.